Here is a 241-residue protein sequence, read N- to C-terminus: Probable phosphatase Cthe_0111 (241 aa).

Zn(2+) is bound by residues histidine 8, histidine 10, histidine 16, histidine 41, glutamate 74, histidine 102, histidine 132, aspartate 192, and histidine 194.

The protein belongs to the PHP family. It depends on Zn(2+) as a cofactor.

This is Probable phosphatase Cthe_0111 from Acetivibrio thermocellus (strain ATCC 27405 / DSM 1237 / JCM 9322 / NBRC 103400 / NCIMB 10682 / NRRL B-4536 / VPI 7372) (Clostridium thermocellum).